The following is a 221-amino-acid chain: Aspartic protease inhibitor 1 (221 aa).

The N-terminal stretch at 1 to 23 is a signal peptide; the sequence is MMKCLFFLCLCLFPILVFSSTFT. A propeptide spanning residues 24 to 32 is cleaved from the precursor; that stretch reads SQNPINLPS. Positions 26-31 match the Vacuolar targeting signal motif; sequence NPINLP. N51 is a glycosylation site (N-linked (GlcNAc...) asparagine). Cystine bridges form between C80–C125 and C174–C186.

The protein belongs to the protease inhibitor I3 (leguminous Kunitz-type inhibitor) family. Tubers, young leaves and flower bud. Not detected in root, stem or mature leaves.

The protein localises to the vacuole. Functionally, inhibitor of cathepsin D (aspartic protease). May also inhibit trypsin and chymotrypsin (serine proteases). Protects the plant by inhibiting proteases of invading organisms. This Solanum tuberosum (Potato) protein is Aspartic protease inhibitor 1.